The sequence spans 78 residues: Small ribosomal subunit protein bS16c (78 aa).

This sequence belongs to the bacterial ribosomal protein bS16 family.

Its subcellular location is the plastid. The protein resides in the chloroplast. The polypeptide is Small ribosomal subunit protein bS16c (Gracilaria tenuistipitata var. liui (Red alga)).